A 156-amino-acid polypeptide reads, in one-letter code: Rhombotin-1 (156 aa).

2 consecutive LIM zinc-binding domains span residues cysteine 24–glycine 83 and cysteine 88–leucine 147.

In terms of tissue distribution, expressed mainly in the central nervous. Low level of expression in other tissues including thymus.

It localises to the nucleus. May be involved in gene regulation within neural lineage cells potentially by direct DNA binding or by binding to other transcription factors. The chain is Rhombotin-1 (LMO1) from Homo sapiens (Human).